A 536-amino-acid polypeptide reads, in one-letter code: 2,3-bisphosphoglycerate-independent phosphoglycerate mutase (536 aa).

Mn(2+)-binding residues include D19 and S69. S69 acts as the Phosphoserine intermediate in catalysis. Substrate-binding positions include H130, R160–D161, R192, R198, R262–R265, and K335. D402, H406, D443, H444, and H461 together coordinate Mn(2+).

Belongs to the BPG-independent phosphoglycerate mutase family. In terms of assembly, monomer. Mn(2+) serves as cofactor.

The enzyme catalyses (2R)-2-phosphoglycerate = (2R)-3-phosphoglycerate. It functions in the pathway carbohydrate degradation; glycolysis; pyruvate from D-glyceraldehyde 3-phosphate: step 3/5. Its function is as follows. Catalyzes the interconversion of 2-phosphoglycerate and 3-phosphoglycerate. In Gloeobacter violaceus (strain ATCC 29082 / PCC 7421), this protein is 2,3-bisphosphoglycerate-independent phosphoglycerate mutase.